A 157-amino-acid chain; its full sequence is ATP synthase subunit b (157 aa).

A helical transmembrane segment spans residues 7-29 (LISQAIAFSLFILFTARFVWPYL).

The protein belongs to the ATPase B chain family. In terms of assembly, F-type ATPases have 2 components, F(1) - the catalytic core - and F(0) - the membrane proton channel. F(1) has five subunits: alpha(3), beta(3), gamma(1), delta(1), epsilon(1). F(0) has three main subunits: a(1), b(2) and c(10-14). The alpha and beta chains form an alternating ring which encloses part of the gamma chain. F(1) is attached to F(0) by a central stalk formed by the gamma and epsilon chains, while a peripheral stalk is formed by the delta and b chains.

It is found in the cell inner membrane. Its function is as follows. F(1)F(0) ATP synthase produces ATP from ADP in the presence of a proton or sodium gradient. F-type ATPases consist of two structural domains, F(1) containing the extramembraneous catalytic core and F(0) containing the membrane proton channel, linked together by a central stalk and a peripheral stalk. During catalysis, ATP synthesis in the catalytic domain of F(1) is coupled via a rotary mechanism of the central stalk subunits to proton translocation. In terms of biological role, component of the F(0) channel, it forms part of the peripheral stalk, linking F(1) to F(0). This chain is ATP synthase subunit b, found in Nitrosomonas europaea (strain ATCC 19718 / CIP 103999 / KCTC 2705 / NBRC 14298).